A 291-amino-acid polypeptide reads, in one-letter code: MFIIELIKGIILGVVEGLTEFAPVSSTGHMILVDDMWLKSSEFLGSQSAFTFKIVIQLGSVFAAAWVFRERFLEILHIGKHKHVEGENDQQRRSKPRRLNLLHVLVGMVPAGILGLLFDDFIEEHLFSVPTVMIGLFVGAIYMIIADKYSVKVKNPQTVDQINYFQAFVIGISQAVAMWPGFSRSGSTISTGVLMKLNHKAASDFTFIMAVPIMLAASGLSLLKHYQDIQIADIPFYILGFLAAFTVGLIAIKTFLHLINKIKLIPFAIYRIVLVIFIAILYFGFGIGKGI.

8 helical membrane passes run 1–21 (MFIIELIKGIILGVVEGLTEF), 48–68 (SAFTFKIVIQLGSVFAAAWVF), 102–122 (LHVLVGMVPAGILGLLFDDFI), 126–146 (LFSVPTVMIGLFVGAIYMIIA), 162–182 (INYFQAFVIGISQAVAMWPGF), 203–223 (SDFTFIMAVPIMLAASGLSLL), 231–251 (IADIPFYILGFLAAFTVGLIA), and 267–287 (FAIYRIVLVIFIAILYFGFGI).

It belongs to the UppP family.

The protein resides in the cell membrane. The enzyme catalyses di-trans,octa-cis-undecaprenyl diphosphate + H2O = di-trans,octa-cis-undecaprenyl phosphate + phosphate + H(+). Its function is as follows. Catalyzes the dephosphorylation of undecaprenyl diphosphate (UPP). Confers resistance to bacitracin. This is Undecaprenyl-diphosphatase from Staphylococcus aureus (strain Mu3 / ATCC 700698).